The sequence spans 372 residues: NAD(P)H-quinone oxidoreductase subunit 1 (372 aa).

8 helical membrane-spanning segments follow: residues 27 to 47 (LLWLPLPMLLVLTAALIGVLV), 97 to 117 (LLFTLGPVLVLIPVILSWLII), 128 to 148 (VGIGIFLWIALSSIQPIGLLM), 176 to 196 (LALAVLAIVMMSNSLSTIDIV), 204 to 224 (FLSWNIWRQPVGFLIFWICAL), 270 to 290 (LLVSVLYLGGWGFPIPVELIA), 308 to 328 (SLGIVMTVFKTYLLVFLAILL), and 351 to 371 (ISLVNLLFTAALKLVFPFAFG).

It belongs to the complex I subunit 1 family. In terms of assembly, NDH-1 is composed of at least 11 different subunits.

Its subcellular location is the cellular thylakoid membrane. It carries out the reaction a plastoquinone + NADH + (n+1) H(+)(in) = a plastoquinol + NAD(+) + n H(+)(out). It catalyses the reaction a plastoquinone + NADPH + (n+1) H(+)(in) = a plastoquinol + NADP(+) + n H(+)(out). Its function is as follows. NDH-1 shuttles electrons from an unknown electron donor, via FMN and iron-sulfur (Fe-S) centers, to quinones in the respiratory and/or the photosynthetic chain. The immediate electron acceptor for the enzyme in this species is believed to be plastoquinone. Couples the redox reaction to proton translocation, and thus conserves the redox energy in a proton gradient. The sequence is that of NAD(P)H-quinone oxidoreductase subunit 1 from Prochlorococcus marinus (strain SARG / CCMP1375 / SS120).